The primary structure comprises 595 residues: Threonine dehydratase 2 biosynthetic, chloroplastic (595 aa).

Residues 1-51 (MEFLCLAPTRSFSTNPKLTKSIPSDHTSTTSRIFTYQNMRGSTMRPLALPL) constitute a chloroplast transit peptide. N6-(pyridoxal phosphate)lysine is present on lysine 143. 2 consecutive ACT-like domains span residues 420–492 (ALLA…NLSH) and 514–585 (IFGE…LDNY).

Belongs to the serine/threonine dehydratase family. As to quaternary structure, homotetramer. Pyridoxal 5'-phosphate is required as a cofactor. Proteolytically cleaved by a chymotrypsin-like digestive protease in the midgut of the lepidopteran insects to remove the C-terminal regulatory domain, which allows efficient metabolizing of threonine in the presence of high isoleucine levels in the gut. Expressed in floral buds, 8-9 mm long flowers 1 to 2 days before anthesis, open flowers and floral organs including sepals, petals, stamens and carpels of 8-9 mm flowers (at protein level). Expressed in very early floral meristems of the anantha. Over 500-fold expression in mature flowers compared to leaves. Expressed in sepals, petals, stamens and carpels of the mature flower. In sepals, mostly expressed in the abaxial mesophyll cells and in petals in parenchymal cells. Not expressed in epidermal or vascular tissues of sepals and petals. In stamens, expressed in parenchymal cells of the connective and lobes, but not expressed in differentiated tissues such as tapetum (TP), stomium (SM), or pollen grains (PG). Not expressed in roots or seeds. High level of expression in immature flower buds, unopened flowers and opened flowers. Not expressed in unstressed leaves, root, stem or petiole.

The protein resides in the plastid. The protein localises to the chloroplast. It carries out the reaction L-threonine = 2-oxobutanoate + NH4(+). It catalyses the reaction L-serine = pyruvate + NH4(+). It participates in amino-acid biosynthesis; L-isoleucine biosynthesis; 2-oxobutanoate from L-threonine: step 1/1. Its activity is regulated as follows. Threonine dehydratase 2 biosynthetic, chloroplastic: Strongly inhibited by 1 mM isoleucine. Processed threonine dehydratase 2: Not inhibited by isoleucine. Not required for normal growth and development of the plant. In terms of biological role, involved in defense against lepidopteran, but not coleopteran herbivore insects. Acts in the insect gut to degrade threonine, which is an essential and limiting nutrient for the growth of lepidopteran larvae. Active against both L-threonine and L-serine. In Solanum lycopersicum (Tomato), this protein is Threonine dehydratase 2 biosynthetic, chloroplastic.